We begin with the raw amino-acid sequence, 647 residues long: Bifunctional enzyme CysN/CysC (647 aa).

The segment at 1 to 472 is sulfate adenylyltransferase; the sequence is MSHQSDLIAT…TEERAARFGQ (472 aa). The tr-type G domain occupies 22 to 239; that stretch reads KQLLRFITCG…LETVYIGSDR (218 aa). The G1 stretch occupies residues 31 to 38; sequence GSVDDGKS. 31-38 is a binding site for GTP; the sequence is GSVDDGKS. The interval 89-93 is G2; that stretch reads GITID. The segment at 110-113 is G3; that stretch reads DTPG. GTP is bound by residues 110–114 and 165–168; these read DTPGH and NKMD. The tract at residues 165 to 168 is G4; that stretch reads NKMD. Residues 204 to 206 form a G5 region; sequence SAL. Positions 473–614 are adenylyl-sulfate kinase; it reads KPATVLLTGL…FPGVTAKYDV (142 aa). 481–488 provides a ligand contact to ATP; that stretch reads GLTGSGKT.

This sequence in the C-terminal section; belongs to the APS kinase family. In the N-terminal section; belongs to the TRAFAC class translation factor GTPase superfamily. Classic translation factor GTPase family. CysN/NodQ subfamily. As to quaternary structure, heterodimer composed of CysD, the smaller subunit, and CysNC.

The catalysed reaction is sulfate + ATP + H(+) = adenosine 5'-phosphosulfate + diphosphate. The enzyme catalyses adenosine 5'-phosphosulfate + ATP = 3'-phosphoadenylyl sulfate + ADP + H(+). It participates in sulfur metabolism; hydrogen sulfide biosynthesis; sulfite from sulfate: step 1/3. It functions in the pathway sulfur metabolism; hydrogen sulfide biosynthesis; sulfite from sulfate: step 2/3. With CysD forms the ATP sulfurylase (ATPS) that catalyzes the adenylation of sulfate producing adenosine 5'-phosphosulfate (APS) and diphosphate, the first enzymatic step in sulfur assimilation pathway. APS synthesis involves the formation of a high-energy phosphoric-sulfuric acid anhydride bond driven by GTP hydrolysis by CysN coupled to ATP hydrolysis by CysD. Functionally, APS kinase catalyzes the synthesis of activated sulfate. In Rhodopirellula baltica (strain DSM 10527 / NCIMB 13988 / SH1), this protein is Bifunctional enzyme CysN/CysC (cysNC).